The sequence spans 352 residues: Isopentenyl-diphosphate delta-isomerase (352 aa).

6 to 7 (RK) is a binding site for substrate. FMN-binding positions include 63–65 (AMT), S93, and N122. Residue 93-95 (SQR) coordinates substrate. Q160 is a substrate binding site. Mg(2+) is bound at residue E161. FMN contacts are provided by residues K192, T221, 271-273 (GIR), and 292-293 (SQ).

This sequence belongs to the IPP isomerase type 2 family. In terms of assembly, homooctamer. Dimer of tetramers. Requires FMN as cofactor. The cofactor is NADPH. It depends on Mg(2+) as a cofactor.

The protein localises to the cytoplasm. It catalyses the reaction isopentenyl diphosphate = dimethylallyl diphosphate. Its function is as follows. Involved in the biosynthesis of isoprenoids. Catalyzes the 1,3-allylic rearrangement of the homoallylic substrate isopentenyl (IPP) to its allylic isomer, dimethylallyl diphosphate (DMAPP). In Pyrobaculum aerophilum (strain ATCC 51768 / DSM 7523 / JCM 9630 / CIP 104966 / NBRC 100827 / IM2), this protein is Isopentenyl-diphosphate delta-isomerase.